A 25-amino-acid chain; its full sequence is M-lycotoxin-Hc1a (25 aa).

A Leucine amide modification is found at Leu-25.

Belongs to the cationic peptide 04 (cupiennin) family. 05 subfamily. In terms of tissue distribution, expressed by the venom gland.

Its subcellular location is the secreted. The protein localises to the target cell membrane. Forms pore that permeabilize the cell membrane. Promotes efflux of calcium from synaptosomes, causes hemolysis, and dissipates voltage gradients across muscle membrane. Potently inhibits the growth of bacteria, yeast and Leishmania. Is lethal to lepidopteran larvae. May function both in the prey capture strategy as well as protection from infectious organisms arising from prey ingestion. The protein is M-lycotoxin-Hc1a of Hogna carolinensis (Carolina wolf spider).